The primary structure comprises 391 residues: Formate-dependent phosphoribosylglycinamide formyltransferase (391 aa).

N(1)-(5-phospho-beta-D-ribosyl)glycinamide contacts are provided by residues 18–19 (EL) and Glu78. ATP is bound by residues Arg110, Lys151, 156 to 161 (SSGKGQ), 191 to 194 (EEFI), and Glu199. Positions 115–305 (ELAAQQLGVR…EFELHLRAIL (191 aa)) constitute an ATP-grasp domain. Mg(2+) is bound by residues Glu264 and Glu276. Residues Asp283, Lys353, and 360–361 (RR) each bind N(1)-(5-phospho-beta-D-ribosyl)glycinamide.

It belongs to the PurK/PurT family. In terms of assembly, homodimer.

The enzyme catalyses N(1)-(5-phospho-beta-D-ribosyl)glycinamide + formate + ATP = N(2)-formyl-N(1)-(5-phospho-beta-D-ribosyl)glycinamide + ADP + phosphate + H(+). The protein operates within purine metabolism; IMP biosynthesis via de novo pathway; N(2)-formyl-N(1)-(5-phospho-D-ribosyl)glycinamide from N(1)-(5-phospho-D-ribosyl)glycinamide (formate route): step 1/1. Functionally, involved in the de novo purine biosynthesis. Catalyzes the transfer of formate to 5-phospho-ribosyl-glycinamide (GAR), producing 5-phospho-ribosyl-N-formylglycinamide (FGAR). Formate is provided by PurU via hydrolysis of 10-formyl-tetrahydrofolate. This Synechocystis sp. (strain ATCC 27184 / PCC 6803 / Kazusa) protein is Formate-dependent phosphoribosylglycinamide formyltransferase.